A 194-amino-acid chain; its full sequence is Fe/S biogenesis protein NfuA (194 aa).

Positions 151 and 154 each coordinate [4Fe-4S] cluster.

The protein belongs to the NfuA family. As to quaternary structure, homodimer. Requires [4Fe-4S] cluster as cofactor.

In terms of biological role, involved in iron-sulfur cluster biogenesis. Binds a 4Fe-4S cluster, can transfer this cluster to apoproteins, and thereby intervenes in the maturation of Fe/S proteins. Could also act as a scaffold/chaperone for damaged Fe/S proteins. In Actinobacillus succinogenes (strain ATCC 55618 / DSM 22257 / CCUG 43843 / 130Z), this protein is Fe/S biogenesis protein NfuA.